An 885-amino-acid polypeptide reads, in one-letter code: Protein transport protein SEC24-1 (885 aa).

Zn(2+)-binding residues include cysteine 164, cysteine 167, cysteine 186, and cysteine 189. The tract at residues 164 to 189 (CRRCRSYLNPFVAFIEQGRRWQCNIC) is zinc finger-like. Positions 296–332 (DDYEESDDDDDEDDDDEEEDNEEEEEEEEDEEDDDDS) are disordered.

This sequence belongs to the SEC23/SEC24 family. SEC24 subfamily. As to quaternary structure, the COPII coat is composed of at least 5 proteins: the SEC23/24 complex, the SEC13/31 complex, and the protein SAR1. Golgi apparatus membrane; Peripheral membrane protein; Cytoplasmic side.

It localises to the cytoplasm. The protein resides in the cytoplasmic vesicle. The protein localises to the COPII-coated vesicle membrane. It is found in the endoplasmic reticulum membrane. Its subcellular location is the golgi apparatus membrane. Its function is as follows. Component of the coat protein complex II (COPII) which promotes the formation of transport vesicles from the endoplasmic reticulum (ER). The coat has two main functions, the physical deformation of the endoplasmic reticulum membrane into vesicles and the selection of cargo molecules. The chain is Protein transport protein SEC24-1 (SEC241) from Saccharomyces uvarum (strain ATCC 76518 / CBS 7001 / CLIB 283 / NBRC 10550 / MCYC 623 / NCYC 2669 / NRRL Y-11845) (Yeast).